Consider the following 388-residue polypeptide: Succinate--CoA ligase [ADP-forming] subunit beta (388 aa).

ATP is bound by residues Lys-46, Gly-53–Gly-55, Glu-99, Cys-102, and Glu-107. Residues Asn-199 and Asp-213 each contribute to the Mg(2+) site. Substrate is bound by residues Asn-264 and Gly-321 to Val-323.

Belongs to the succinate/malate CoA ligase beta subunit family. In terms of assembly, heterotetramer of two alpha and two beta subunits. It depends on Mg(2+) as a cofactor.

It carries out the reaction succinate + ATP + CoA = succinyl-CoA + ADP + phosphate. The enzyme catalyses GTP + succinate + CoA = succinyl-CoA + GDP + phosphate. It participates in carbohydrate metabolism; tricarboxylic acid cycle; succinate from succinyl-CoA (ligase route): step 1/1. In terms of biological role, succinyl-CoA synthetase functions in the citric acid cycle (TCA), coupling the hydrolysis of succinyl-CoA to the synthesis of either ATP or GTP and thus represents the only step of substrate-level phosphorylation in the TCA. The beta subunit provides nucleotide specificity of the enzyme and binds the substrate succinate, while the binding sites for coenzyme A and phosphate are found in the alpha subunit. The chain is Succinate--CoA ligase [ADP-forming] subunit beta from Actinobacillus pleuropneumoniae serotype 3 (strain JL03).